The following is a 217-amino-acid chain: Large ribosomal subunit protein uL3 (217 aa).

It belongs to the universal ribosomal protein uL3 family. In terms of assembly, part of the 50S ribosomal subunit. Forms a cluster with proteins L14 and L19.

Functionally, one of the primary rRNA binding proteins, it binds directly near the 3'-end of the 23S rRNA, where it nucleates assembly of the 50S subunit. The protein is Large ribosomal subunit protein uL3 of Mycobacterium ulcerans (strain Agy99).